We begin with the raw amino-acid sequence, 248 residues long: Anamorsin homolog (248 aa).

Residues 4–129 (FKGLQKSLYI…ETGSSARLSF (126 aa)) are N-terminal SAM-like domain. Positions 130–161 (AKKNANAANVWKISGDDEELIDEEELLDEEDK) are linker. The [2Fe-2S] cluster site is built by Cys-172, Cys-181, Cys-184, and Cys-186. The segment at 172-186 (CSTTGKRKACKNCSC) is fe-S binding site A. Residues Cys-209, Cys-212, Cys-220, and Cys-223 each coordinate [4Fe-4S] cluster. 2 short sequence motifs (cx2C motif) span residues 209-212 (CGNC) and 220-223 (CSTC). The tract at residues 209–223 (CGNCYLGDAFRCSTC) is fe-S binding site B.

It belongs to the anamorsin family. In terms of assembly, monomer. It depends on [2Fe-2S] cluster as a cofactor. [4Fe-4S] cluster is required as a cofactor.

The protein localises to the cytoplasm. It is found in the mitochondrion intermembrane space. Functionally, component of the cytosolic iron-sulfur (Fe-S) protein assembly (CIA) machinery. Required for the maturation of extramitochondrial Fe-S proteins. Part of an electron transfer chain functioning in an early step of cytosolic Fe-S biogenesis, facilitating the de novo assembly of a [4Fe-4S] cluster on the cytosolic Fe-S scaffold complex. Electrons are transferred from NADPH via a FAD- and FMN-containing diflavin oxidoreductase. Together with the diflavin oxidoreductase, also required for the assembly of the diferric tyrosyl radical cofactor of ribonucleotide reductase (RNR), probably by providing electrons for reduction during radical cofactor maturation in the catalytic small subunit. The sequence is that of Anamorsin homolog from Drosophila sechellia (Fruit fly).